Here is a 203-residue protein sequence, read N- to C-terminus: Mitotic spindle assembly checkpoint protein MAD2A (203 aa).

The 183-residue stretch at 14–196 folds into the HORMA domain; sequence KGSTEIVTEF…TTIHKVESMV (183 aa). A required for assuming the closed conformation and for interaction with cdc20 region spans residues 194–203; that stretch reads SMVAYKISND.

This sequence belongs to the MAD2 family. In terms of assembly, interacts with cdc20.

The protein localises to the nucleus. Its subcellular location is the chromosome. It localises to the centromere. The protein resides in the kinetochore. It is found in the cytoplasm. Functionally, component of the spindle-assembly checkpoint that prevents the onset of anaphase until all chromosomes are properly aligned at the metaphase plate. Required for the execution of the mitotic checkpoint which monitors the process of kinetochore-spindle attachment and inhibits the activity of the anaphase promoting complex until all chromosomes are aligned at the metaphase plate. This is Mitotic spindle assembly checkpoint protein MAD2A (mad2l1-1) from Dictyostelium discoideum (Social amoeba).